Reading from the N-terminus, the 121-residue chain is Succinate dehydrogenase assembly factor 3, mitochondrial (121 aa).

Residues 1–35 constitute a mitochondrion transit peptide; the sequence is MRPSLVRLVRPRRPERKTSPILPPLKLYKALLRAH.

It belongs to the complex I LYR family. SDHAF3 subfamily. As to quaternary structure, interacts with the iron-sulfur protein subunit within the SDH catalytic dimer.

It is found in the mitochondrion matrix. In terms of biological role, plays an essential role in the assembly of succinate dehydrogenase (SDH), an enzyme complex (also referred to as respiratory complex II) that is a component of both the tricarboxylic acid (TCA) cycle and the mitochondrial electron transport chain, and which couples the oxidation of succinate to fumarate with the reduction of ubiquinone (coenzyme Q) to ubiquinol. Promotes maturation of the iron-sulfur protein subunit of the SDH catalytic dimer, protecting it from the deleterious effects of oxidants. May act together with SDHAF1. This is Succinate dehydrogenase assembly factor 3, mitochondrial from Debaryomyces hansenii (strain ATCC 36239 / CBS 767 / BCRC 21394 / JCM 1990 / NBRC 0083 / IGC 2968) (Yeast).